The following is a 327-amino-acid chain: Mitochondrial thiamine pyrophosphate carrier 1 (327 aa).

3 Solcar repeats span residues 13-114 (GSKL…AAQL), 126-214 (PAAA…LRAP), and 222-317 (FWGG…VLRA). 6 helical membrane passes run 16 to 36 (LQVV…IAPL), 95 to 111 (LLYI…YRSA), 132 to 152 (FVAG…LDLL), 189 to 209 (GIGP…AAYE), 223 to 245 (WGGQ…VFPL), and 292 to 309 (GLTV…VTMW).

The protein belongs to the mitochondrial carrier (TC 2.A.29) family.

It is found in the mitochondrion inner membrane. Mitochondrial transporter that mediates uptake of thiamine pyrophosphate (ThPP) into mitochondria. This Pyricularia oryzae (strain 70-15 / ATCC MYA-4617 / FGSC 8958) (Rice blast fungus) protein is Mitochondrial thiamine pyrophosphate carrier 1 (TPC1).